A 390-amino-acid chain; its full sequence is tRNA(Met) cytidine acetate ligase (390 aa).

ATP is bound by residues 7–20, Gly101, Asn162, and Arg187; that span reads VVEYNPFHNGHKLH.

This sequence belongs to the TmcAL family.

It localises to the cytoplasm. It carries out the reaction cytidine(34) in elongator tRNA(Met) + acetate + ATP = N(4)-acetylcytidine(34) in elongator tRNA(Met) + AMP + diphosphate. Catalyzes the formation of N(4)-acetylcytidine (ac(4)C) at the wobble position of elongator tRNA(Met), using acetate and ATP as substrates. First activates an acetate ion to form acetyladenylate (Ac-AMP) and then transfers the acetyl group to tRNA to form ac(4)C34. The sequence is that of tRNA(Met) cytidine acetate ligase from Listeria monocytogenes serotype 4a (strain HCC23).